The following is a 97-amino-acid chain: Small ribosomal subunit protein bS18c (97 aa).

It belongs to the bacterial ribosomal protein bS18 family. In terms of assembly, part of the 30S ribosomal subunit.

It localises to the plastid. The protein localises to the chloroplast. In Oenothera glazioviana (Large-flowered evening primrose), this protein is Small ribosomal subunit protein bS18c.